Reading from the N-terminus, the 207-residue chain is NADH-quinone oxidoreductase subunit A (207 aa).

The next 3 membrane-spanning stretches (helical) occupy residues 6–26 (WSAI…LVVP), 62–82 (LVAI…AYAV), and 87–107 (AGWL…IGLV).

The protein belongs to the complex I subunit 3 family. As to quaternary structure, NDH-1 is composed of 14 different subunits. Subunits NuoA, H, J, K, L, M, N constitute the membrane sector of the complex.

It is found in the cell inner membrane. It carries out the reaction a quinone + NADH + 5 H(+)(in) = a quinol + NAD(+) + 4 H(+)(out). Its function is as follows. NDH-1 shuttles electrons from NADH, via FMN and iron-sulfur (Fe-S) centers, to quinones in the respiratory chain. The immediate electron acceptor for the enzyme in this species is believed to be ubiquinone. Couples the redox reaction to proton translocation (for every two electrons transferred, four hydrogen ions are translocated across the cytoplasmic membrane), and thus conserves the redox energy in a proton gradient. In Psychrobacter arcticus (strain DSM 17307 / VKM B-2377 / 273-4), this protein is NADH-quinone oxidoreductase subunit A.